A 207-amino-acid polypeptide reads, in one-letter code: Abscisic acid receptor PYL9 (207 aa).

An START-like region spans residues 31–197; sequence FPPSTTTATT…NLQMLAAVAE (167 aa). Residues Lys74, 104–109, 131–137, and Glu162 each bind abscisate; these read ASTSTE and RLRNYRS. Residues 100 to 104 carry the Gate loop motif; the sequence is SGLPA. A Latch loop motif is present at residues 130–132; that stretch reads HRL.

Belongs to the PYR/PYL/RCAR abscisic acid intracellular receptor family. As to quaternary structure, homodimer. Interacts with PP2C06. Interacts with PP2C50. Binding to PP2C50 is dependent on the presence of abscisic acid (ABA). Interacts with PP2C30 and PP2C53. Binding to PP2C30 and PP2C53 is dependent on the presence of ABA.

It is found in the cytoplasm. Its subcellular location is the cytosol. It localises to the nucleus. In terms of biological role, involved in abscisic acid (ABA) signaling during seed germination and abiotic stress response. Acts as a positive regulator of ABA-mediated inhibition of seed germination, and tolerance to drought and cold stresses. Inhibits the activity of the protein phosphatases PP2C06 and PP2C09 when activated by abscisic acid (ABA). This is Abscisic acid receptor PYL9 from Oryza sativa subsp. japonica (Rice).